We begin with the raw amino-acid sequence, 75 residues long: Exodeoxyribonuclease 7 small subunit (75 aa).

The protein belongs to the XseB family. In terms of assembly, heterooligomer composed of large and small subunits.

The protein resides in the cytoplasm. The catalysed reaction is Exonucleolytic cleavage in either 5'- to 3'- or 3'- to 5'-direction to yield nucleoside 5'-phosphates.. Its function is as follows. Bidirectionally degrades single-stranded DNA into large acid-insoluble oligonucleotides, which are then degraded further into small acid-soluble oligonucleotides. The polypeptide is Exodeoxyribonuclease 7 small subunit (Listeria innocua serovar 6a (strain ATCC BAA-680 / CLIP 11262)).